The following is a 145-amino-acid chain: QPEEPRCRETPETWSGVLYIISVRNTEVLFTISSSSYDRTEQKIKITMVKSMTNQPLKTVLDDYEKRIRYCKNETLEGELPSFGVPENAHFDGPVETLGAKIAGLGVTVAHYTIAERGFSYFTYHPLGDEGTQCIPITNSIATLD.

N73 carries N-linked (GlcNAc...) asparagine glycosylation.

As to quaternary structure, probable heterotrimer consisting of an alpha chain and two beta chains. The alpha chain can probably have different glycosylation states. In terms of processing, glycosylated.

In terms of biological role, lectin with affinity for N-acetyl-galactosamine, carragenan and glycoprotein porcine stomach mucin (PSM). Has metal-independent hemagglutinating activity towards erythrocytes from rabbit and human. Hemagglutinating activity is not inhibited by D-galactose, D-glucose, D-mannose, D-fucose, methyl-alpha-D-galactopyranoside, methyl-alpha-D-glucopyranoside, N-acetyl-glucosamine, N-acetyl-mannosamine, D-fructose, alpha-D-lactose, beta-D-lactose, D-lactulose, D-sucrose, fucoidan or glycoproteins thyroglobulin and ovalmucoid. The chain is Halilectin 3, alpha chain from Haliclona caerulea (Blue Caribbean sponge).